The sequence spans 231 residues: NADH-ubiquinone oxidoreductase chain 4 (231 aa).

The next 7 membrane-spanning stretches (helical) occupy residues P1–I21, V34–L54, I63–G85, A89–Y111, M128–P148, T169–L189, and L211–T231.

It belongs to the complex I subunit 4 family.

The protein resides in the mitochondrion membrane. It catalyses the reaction a ubiquinone + NADH + 5 H(+)(in) = a ubiquinol + NAD(+) + 4 H(+)(out). Functionally, core subunit of the mitochondrial membrane respiratory chain NADH dehydrogenase (Complex I) that is believed to belong to the minimal assembly required for catalysis. Complex I functions in the transfer of electrons from NADH to the respiratory chain. The immediate electron acceptor for the enzyme is believed to be ubiquinone. The protein is NADH-ubiquinone oxidoreductase chain 4 (MT-ND4) of Sistrurus miliarius (Pigmy rattlesnake).